A 714-amino-acid chain; its full sequence is Fatty acid oxidation complex subunit alpha (714 aa).

The enoyl-CoA hydratase stretch occupies residues M1–P190. The interval A306–Q714 is 3-hydroxyacyl-CoA dehydrogenase.

It in the N-terminal section; belongs to the enoyl-CoA hydratase/isomerase family. The protein in the central section; belongs to the 3-hydroxyacyl-CoA dehydrogenase family. Heterotetramer of two alpha chains (FadJ) and two beta chains (FadI).

The protein resides in the cytoplasm. The catalysed reaction is a (3S)-3-hydroxyacyl-CoA = a (2E)-enoyl-CoA + H2O. It carries out the reaction a 4-saturated-(3S)-3-hydroxyacyl-CoA = a (3E)-enoyl-CoA + H2O. The enzyme catalyses a (3S)-3-hydroxyacyl-CoA + NAD(+) = a 3-oxoacyl-CoA + NADH + H(+). It catalyses the reaction (3S)-3-hydroxybutanoyl-CoA = (3R)-3-hydroxybutanoyl-CoA. It participates in lipid metabolism; fatty acid beta-oxidation. Its function is as follows. Catalyzes the formation of a hydroxyacyl-CoA by addition of water on enoyl-CoA. Also exhibits 3-hydroxyacyl-CoA epimerase and 3-hydroxyacyl-CoA dehydrogenase activities. This Escherichia coli O81 (strain ED1a) protein is Fatty acid oxidation complex subunit alpha.